Reading from the N-terminus, the 111-residue chain is Large ribosomal subunit protein P2 (111 aa).

Residues 81–111 are disordered; that stretch reads AAGGAAAPAAEEKKEEEKEESDEDMGFGLFD. Serine 101 carries the post-translational modification Phosphoserine.

The protein belongs to the eukaryotic ribosomal protein P1/P2 family. In terms of assembly, P1 and P2 exist as dimers at the large ribosomal subunit.

Its function is as follows. Plays an important role in the elongation step of protein synthesis. The sequence is that of Large ribosomal subunit protein P2 from Aspergillus fumigatus (strain ATCC MYA-4609 / CBS 101355 / FGSC A1100 / Af293) (Neosartorya fumigata).